The primary structure comprises 293 residues: 4-hydroxy-tetrahydrodipicolinate synthase 1 (293 aa).

Thr-46 provides a ligand contact to pyruvate. Tyr-134 acts as the Proton donor/acceptor in catalysis. Lys-162 functions as the Schiff-base intermediate with substrate in the catalytic mechanism. Ile-204 provides a ligand contact to pyruvate.

It belongs to the DapA family. As to quaternary structure, homotetramer; dimer of dimers.

The protein localises to the cytoplasm. It carries out the reaction L-aspartate 4-semialdehyde + pyruvate = (2S,4S)-4-hydroxy-2,3,4,5-tetrahydrodipicolinate + H2O + H(+). Its pathway is amino-acid biosynthesis; L-lysine biosynthesis via DAP pathway; (S)-tetrahydrodipicolinate from L-aspartate: step 3/4. In terms of biological role, catalyzes the condensation of (S)-aspartate-beta-semialdehyde [(S)-ASA] and pyruvate to 4-hydroxy-tetrahydrodipicolinate (HTPA). The sequence is that of 4-hydroxy-tetrahydrodipicolinate synthase 1 from Clostridium acetobutylicum (strain ATCC 824 / DSM 792 / JCM 1419 / IAM 19013 / LMG 5710 / NBRC 13948 / NRRL B-527 / VKM B-1787 / 2291 / W).